Here is a 2923-residue protein sequence, read N- to C-terminus: Cadherin EGF LAG seven-pass G-type receptor 2 (2923 aa).

Residues methionine 1–glycine 31 form the signal peptide. Over aspartate 32 to threonine 2380 the chain is Extracellular. The interval proline 154–threonine 198 is disordered. Residues alanine 158 to glycine 168 show a composition bias toward basic and acidic residues. Polar residues predominate over residues valine 175 to alanine 196. Cadherin domains follow at residues glutamine 182 to phenylalanine 289, glutamate 290 to phenylalanine 399, serine 400 to phenylalanine 505, valine 506 to phenylalanine 610, threonine 611 to phenylalanine 712, glutamine 713 to phenylalanine 815, leucine 816 to phenylalanine 921, glutamate 922 to leucine 1023, and isoleucine 1028 to leucine 1146. Asparagine 486, asparagine 557, and asparagine 701 each carry an N-linked (GlcNAc...) asparagine glycan. N-linked (GlcNAc...) asparagine glycans are attached at residues asparagine 1036, asparagine 1076, asparagine 1182, and asparagine 1212. In terms of domain architecture, EGF-like 1; calcium-binding spans aspartate 1228–glutamate 1286. Intrachain disulfides connect cysteine 1232/cysteine 1243, cysteine 1237/cysteine 1274, cysteine 1276/cysteine 1285, cysteine 1292/cysteine 1303, cysteine 1297/cysteine 1312, cysteine 1314/cysteine 1323, cysteine 1332/cysteine 1343, cysteine 1337/cysteine 1353, and cysteine 1355/cysteine 1365. Residues glutamate 1288–glutamate 1324 enclose the EGF-like 2; calcium-binding domain. The region spanning arginine 1328–glutamine 1366 is the EGF-like 3; calcium-binding domain. The Laminin G-like 1 domain maps to valine 1367–cysteine 1571. Asparagine 1501 and asparagine 1565 each carry an N-linked (GlcNAc...) asparagine glycan. Cystine bridges form between cysteine 1545–cysteine 1571, cysteine 1578–cysteine 1589, cysteine 1583–cysteine 1598, and cysteine 1600–cysteine 1609. The EGF-like 4; calcium-binding domain maps to lysine 1574 to alanine 1610. Asparagine 1591 bears the (3R)-3-hydroxyasparagine mark. Positions alanine 1614–cysteine 1791 constitute a Laminin G-like 2 domain. N-linked (GlcNAc...) asparagine glycosylation is present at asparagine 1741. Cystine bridges form between cysteine 1761–cysteine 1791, cysteine 1797–cysteine 1808, cysteine 1802–cysteine 1817, cysteine 1819–cysteine 1828, cysteine 1832–cysteine 1843, cysteine 1837–cysteine 1855, cysteine 1857–cysteine 1866, cysteine 1887–cysteine 1899, cysteine 1889–cysteine 1906, cysteine 1908–cysteine 1921, cysteine 1924–cysteine 1936, cysteine 1926–cysteine 1943, cysteine 1945–cysteine 1954, and cysteine 1957–cysteine 1969. The EGF-like 5; calcium-binding domain maps to leucine 1793–cysteine 1828. Asparagine 1810 is modified ((3R)-3-hydroxyasparagine). Residue asparagine 1827 is glycosylated (N-linked (GlcNAc...) asparagine). One can recognise an EGF-like 6; calcium-binding domain in the interval threonine 1829–glutamate 1867. The 40-residue stretch at threonine 1883–leucine 1922 folds into the EGF-like 7; calcium-binding domain. N-linked (GlcNAc...) asparagine glycosylation occurs at asparagine 1900. One can recognise a Laminin EGF-like domain in the interval cysteine 1924–valine 1971. Asparagine 2024, asparagine 2043, and asparagine 2061 each carry an N-linked (GlcNAc...) asparagine glycan. In terms of domain architecture, GAIN-B spans glutamate 2199 to glutamate 2369. The segment at proline 2213–proline 2238 is disordered. Cystine bridges form between cysteine 2319–cysteine 2351 and cysteine 2339–cysteine 2353. A GPS region spans residues cysteine 2319–glutamate 2369. Residues asparagine 2323 and asparagine 2345 are each glycosylated (N-linked (GlcNAc...) asparagine). A helical transmembrane segment spans residues tyrosine 2381 to leucine 2401. The Cytoplasmic portion of the chain corresponds to arginine 2402–threonine 2416. A helical membrane pass occupies residues alanine 2417–phenylalanine 2437. Position 2438 (alanine 2438) is a topological domain, extracellular. Residues cysteine 2439–leucine 2459 traverse the membrane as a helical segment. The Cytoplasmic portion of the chain corresponds to glutamate 2460–arginine 2480. Residues phenylalanine 2481–aspartate 2501 traverse the membrane as a helical segment. The Extracellular segment spans residues proline 2502–leucine 2519. A helical membrane pass occupies residues isoleucine 2520–leucine 2540. At alanine 2541–serine 2560 the chain is on the cytoplasmic side. The chain crosses the membrane as a helical span at residues glycine 2561–leucine 2581. Topologically, residues serine 2582–histidine 2591 are extracellular. A helical transmembrane segment spans residues tyrosine 2592 to leucine 2612. Residues serine 2613–histidine 2923 are Cytoplasmic-facing. 2 disordered regions span residues serine 2688–isoleucine 2838 and leucine 2854–leucine 2888. Acidic residues-rich tracts occupy residues threonine 2718–glutamine 2730 and serine 2742–alanine 2753. Positions proline 2807–serine 2819 are enriched in basic and acidic residues. Positions glycine 2863–glycine 2873 are enriched in low complexity.

Belongs to the G-protein coupled receptor 2 family. LN-TM7 subfamily. In terms of assembly, heterodimer of 2 chains generated by proteolytic processing; the large extracellular N-terminal fragment and the membrane-bound C-terminal fragment predominantly remain associated and non-covalently linked. Post-translationally, the iron and 2-oxoglutarate dependent 3-hydroxylation of aspartate and asparagine is (R) stereospecific within EGF domains. In terms of processing, autoproteolytically processed at the GPS region of the GAIN-B domain; this cleavage modulates receptor activity. In terms of tissue distribution, highest expression in brain and testis.

Its subcellular location is the cell membrane. In terms of biological role, receptor that may have an important role in cell/cell signaling during nervous system formation. The sequence is that of Cadherin EGF LAG seven-pass G-type receptor 2 from Homo sapiens (Human).